The following is a 207-amino-acid chain: Small ribosomal subunit protein uS4 (207 aa).

Residues 31–53 are disordered; sequence KAKFDSKPGQHGRTSGARTSDFG. In terms of domain architecture, S4 RNA-binding spans 97 to 157; sequence SRLDNVVYRM…EKSKKQARIV (61 aa).

Belongs to the universal ribosomal protein uS4 family. In terms of assembly, part of the 30S ribosomal subunit. Contacts protein S5. The interaction surface between S4 and S5 is involved in control of translational fidelity.

One of the primary rRNA binding proteins, it binds directly to 16S rRNA where it nucleates assembly of the body of the 30S subunit. Its function is as follows. With S5 and S12 plays an important role in translational accuracy. The protein is Small ribosomal subunit protein uS4 of Paracidovorax citrulli (strain AAC00-1) (Acidovorax citrulli).